The chain runs to 505 residues: Glycerol kinase (505 aa).

T15 contacts ADP. ATP contacts are provided by T15, T16, and S17. T15 contacts sn-glycerol 3-phosphate. R19 lines the ADP pocket. 4 residues coordinate sn-glycerol 3-phosphate: R85, E86, Y136, and D249. Glycerol contacts are provided by R85, E86, Y136, D249, and Q250. Positions 271 and 314 each coordinate ADP. 4 residues coordinate ATP: T271, G314, Q318, and G415. 2 residues coordinate ADP: G415 and N419.

Belongs to the FGGY kinase family.

The catalysed reaction is glycerol + ATP = sn-glycerol 3-phosphate + ADP + H(+). Its pathway is polyol metabolism; glycerol degradation via glycerol kinase pathway; sn-glycerol 3-phosphate from glycerol: step 1/1. Its activity is regulated as follows. Inhibited by fructose 1,6-bisphosphate (FBP). Functionally, key enzyme in the regulation of glycerol uptake and metabolism. Catalyzes the phosphorylation of glycerol to yield sn-glycerol 3-phosphate. This Mycoplasma mycoides subsp. mycoides SC (strain CCUG 32753 / NCTC 10114 / PG1) protein is Glycerol kinase.